Consider the following 357-residue polypeptide: Guanine nucleotide-binding protein alpha-2 subunit (357 aa).

A lipid anchor (N-myristoyl glycine) is attached at Gly2. Cys4 is lipidated: S-palmitoyl cysteine. In terms of domain architecture, G-alpha spans 30–356 (NEVKLLLLGA…TQCVMKAGLY (327 aa)). The tract at residues 33 to 46 (KLLLLGAGESGKST) is G1 motif. 6 residues coordinate GTP: Glu41, Ser42, Gly43, Lys44, Ser45, and Thr46. Ser45 serves as a coordination point for Mg(2+). Phosphoserine is present on Ser113. GTP-binding residues include Asp154, Leu179, Thr185, Gly207, Asn272, Lys273, Asp275, and Ala328. The G2 motif stretch occupies residues 177–185 (DILHTRVMT). Thr185 lines the Mg(2+) pocket. A G3 motif region spans residues 200-209 (FRLVDVGGQR). The tract at residues 268–275 (ILFLNKSD) is G4 motif. Residues 326 to 331 (TCATDT) form a G5 motif region.

The protein belongs to the G-alpha family. G proteins are composed of 3 units; alpha, beta and gamma. The alpha chain contains the guanine nucleotide binding site. Interacts with the RAP guanine nucleotide exchange factor glfB. Mg(2+) is required as a cofactor. Post-translationally, ser-113 is transiently phosphorylated following stimulation with extracellular cAMP.

Functionally, guanine nucleotide-binding proteins (G proteins) are involved as modulators or transducers in various transmembrane signaling systems. G alpha-2 is required for the early aggregation process and most of the known cAMP receptor-mediated responses. Interacts with downstream effector gflB, a Rap guanine nucleotide exchange factor, to regulate the balance between Ras and Rap signaling at the leading edge of chemotaxing cells. This chain is Guanine nucleotide-binding protein alpha-2 subunit (gpaB), found in Dictyostelium discoideum (Social amoeba).